The following is a 46-amino-acid chain: Bottromycin D (46 aa).

Positions 10-46 are excised as a propeptide; it reads MTADFLNDDPNNAELSSLEMEELESWGAWSDDTDQSV.

Post-translationally, the precursor peptide is first ribosomally synthesized and then highly tailored by specific enzymes to yield the final natural product. These modifications include several methylations, cyclization and the formation of t-Leu and Thia-beta-Ala residues.

It is found in the secreted. Bottromycin D is a ribosomally synthesized and post-translationally modified peptide (RiPP) that displays antibiotic activity against methicillin-resistant S.aureus (MRSA). The sequence is that of Bottromycin D from Streptomyces sp.